A 206-amino-acid chain; its full sequence is GCN5-like protein acetyltransferase Rv2170 (206 aa).

Residues 44–205 (EHIRRRGWQA…AFAILGRTLP (162 aa)) form the N-acetyltransferase domain. Y176 serves as the catalytic Proton donor.

It belongs to the acetyltransferase family.

The enzyme catalyses L-lysyl-[protein] + acetyl-CoA = N(6)-acetyl-L-lysyl-[protein] + CoA + H(+). It carries out the reaction propanoyl-CoA + L-lysyl-[protein] = N(6)-propanoyl-L-lysyl-[protein] + CoA + H(+). The catalysed reaction is succinyl-CoA + L-lysyl-[protein] = N(6)-succinyl-L-lysyl-[protein] + CoA + H(+). Its function is as follows. Acetyltransferase involved in the post-translational regulation of the central metabolic enzyme isocitrate dehydrogenase 1 (ICDH-1) through lysine acetylation. Catalyzes the acetylation of ICDH-1 at Lys-30 and Lys-129, using acetyl-CoA as a donor, leading to a reduction of ICDH-1 enzyme activity. Can also use propionyl-CoA and succinyl-CoA as donors. Cannot act on the isocitrate dehydrogenase 2 (ICDH-2). Might play a role in regulating the TCA cycle and methylcitrate cycle when M.tuberculosis utilizes fatty acid as carbon source. In addition, it can acetylate the amino group of isoniazid (INH), one of the first-line drugs used for the treatment of tuberculosis, thereby canceling out the drug toxicity. Acts by catalyzing the transfer of an acetyl group from acetyl-CoA to INH. Following acetylation, INH is broken down into isonicotinic acid and acetylhydrazine. M.smegmatis and M.tuberculosis H37Ra strains overexpressing Rv2170 are resistant to INH. Has little or no acetyltransferase activity with other antibiotics such as streptomycin, neomycin, kanamycin, amikacin, apramycin and gentamicin. This chain is GCN5-like protein acetyltransferase Rv2170, found in Mycobacterium tuberculosis (strain ATCC 25618 / H37Rv).